The following is an 868-amino-acid chain: Translation initiation factor IF-2 (868 aa).

A disordered region spans residues 201-269 (KEEVKPEKVS…GTEKSDKYRE (69 aa)). A compositionally biased stretch (basic residues) spans 249–260 (RGGRSKFKKKKG). A tr-type G domain is found at 368–537 (GRAPVVTIMG…LLQSEVLELK (170 aa)). Residues 377–384 (GHVDHGKT) are G1. Position 377-384 (377-384 (GHVDHGKT)) interacts with GTP. A G2 region spans residues 402 to 406 (GITQH). Residues 423 to 426 (DTPG) are G3. GTP contacts are provided by residues 423–427 (DTPGH) and 477–480 (NKMD). The interval 477–480 (NKMD) is G4. The G5 stretch occupies residues 513–515 (SAK).

The protein belongs to the TRAFAC class translation factor GTPase superfamily. Classic translation factor GTPase family. IF-2 subfamily.

It localises to the cytoplasm. In terms of biological role, one of the essential components for the initiation of protein synthesis. Protects formylmethionyl-tRNA from spontaneous hydrolysis and promotes its binding to the 30S ribosomal subunits. Also involved in the hydrolysis of GTP during the formation of the 70S ribosomal complex. This Legionella pneumophila (strain Corby) protein is Translation initiation factor IF-2.